The chain runs to 569 residues: Paxillin-B (569 aa).

Residues 10–18 carry the LD motif 1 motif; it reads DLDLLLADL. Polar residues predominate over residues 62 to 78; the sequence is QPQTVQTISTPAPKNHN. Residues 62-103 are disordered; that stretch reads QPQTVQTISTPAPKNHNTTTTTASFSVSSQPAPQPPQQSQQI. Over residues 79-102 the composition is skewed to low complexity; it reads TTTTTASFSVSSQPAPQPPQQSQQ. The LD motif 2 motif lies at 106 to 112; it reads LDDLDEL. Residues 129–311 are disordered; the sequence is TTPEEHITHA…SPKVVHGDDL (183 aa). The span at 150–161 shows a compositional bias: low complexity; that stretch reads NTSSTNSASSLS. Composition is skewed to polar residues over residues 162–188 and 196–206; these read RPNNNPSVVSTPQPGKVTSTATITTKK and TLETTSGNNVY. Residues 207–217 show a composition bias toward low complexity; sequence SSQPSQSQPQP. Positions 232–239 match the LD motif 3 motif; the sequence is LDELLKGL. The span at 258 to 272 shows a compositional bias: basic residues; the sequence is HQHHHQHQHHHHHNP. Positions 273 to 301 are enriched in low complexity; that stretch reads NHNQTQTVTTQINIGRTNTPNNNNNNNTN. The short motif at 311–318 is the LD motif 4 element; sequence LDNLLNNL. LIM zinc-binding domains lie at 334–391, 393–452, 453–510, and 511–569; these read GTCG…QELF, ARCA…TFAV, RCGG…QQAG, and SVCS…KLFA.

This sequence belongs to the paxillin family. Expressed in the upper and lower cup of the fruiting body.

It localises to the cytoplasm. The protein resides in the cell cortex. The protein localises to the cell projection. Its subcellular location is the filopodium. It is found in the cell junction. It localises to the focal adhesion. The protein resides in the cytoskeleton. In terms of biological role, required for cell-substrate adhesion, cell sorting, slug migration, and cell differentiation. May function upstream of limB. This Dictyostelium discoideum (Social amoeba) protein is Paxillin-B (paxB).